The following is a 2090-amino-acid chain: Nuclear pore complex protein Nup205 (2090 aa).

This sequence belongs to the NUP186/NUP192/NUP205 family. In terms of assembly, part of the nuclear pore complex (NPC).

It localises to the nucleus. The protein localises to the nuclear pore complex. In terms of biological role, plays a role in the nuclear pore complex (NPC) assembly and maintenance, but with limited role in NPC permeability. Required for specific nuclear import pathways such as Mad import. The chain is Nuclear pore complex protein Nup205 from Drosophila melanogaster (Fruit fly).